Here is a 201-residue protein sequence, read N- to C-terminus: Cytochrome c oxidase assembly protein CtaG (201 aa).

Residues 1-13 (MTDQGENEKKQRR) are Cytoplasmic-facing. A helical; Signal-anchor for type II membrane protein membrane pass occupies residues 14–36 (SNATIAVACLSFFVCMIGAAYAS). The Periplasmic portion of the chain corresponds to 37–201 (VPLYRIFCQV…KAVGSTRNGG (165 aa)).

This sequence belongs to the COX11/CtaG family.

The protein localises to the cell inner membrane. Its function is as follows. Exerts its effect at some terminal stage of cytochrome c oxidase synthesis, probably by being involved in the insertion of the copper B into subunit I. The chain is Cytochrome c oxidase assembly protein CtaG from Brucella ovis (strain ATCC 25840 / 63/290 / NCTC 10512).